Consider the following 459-residue polypeptide: Pentatricopeptide repeat-containing protein At1g07740, mitochondrial (459 aa).

Residues 1–20 constitute a mitochondrion transit peptide; it reads MRRRLSSVLINNQCIASQRH. The segment at 19-41 is disordered; that stretch reads RHYHTSRPEKPTKKASSHEPTHK. Positions 24 to 41 are enriched in basic and acidic residues; sequence SRPEKPTKKASSHEPTHK. PPR repeat units follow at residues 80 to 114, 115 to 149, 150 to 184, 185 to 219, 220 to 254, 255 to 289, 290 to 324, 325 to 359, 360 to 394, and 395 to 429; these read DYPS…NVRC, RESL…DCVR, TIQS…RLRP, NSVS…EVQP, SVVT…RIRP, NAVT…GCKP, GLVN…RIKP, DVVI…GCKP, NAAT…RHCP, and TPAT…NLSF.

Belongs to the PPR family. P subfamily.

Its subcellular location is the mitochondrion. The chain is Pentatricopeptide repeat-containing protein At1g07740, mitochondrial from Arabidopsis thaliana (Mouse-ear cress).